A 409-amino-acid polypeptide reads, in one-letter code: Serine/threonine transporter SstT (409 aa).

A run of 9 helical transmembrane segments spans residues 14–34 (GNLI…GFIA), 57–77 (GALK…SIII), 89–109 (IIIL…VVSF), 149–169 (AISS…GIAL), 190–210 (IVKF…ATSV), 224–244 (LLLV…AAIV), 296–316 (ISIP…IAVL), 338–358 (IIAA…LMLI), and 365–385 (FGIS…IGVV).

It belongs to the dicarboxylate/amino acid:cation symporter (DAACS) (TC 2.A.23) family.

It is found in the cell inner membrane. It catalyses the reaction L-serine(in) + Na(+)(in) = L-serine(out) + Na(+)(out). It carries out the reaction L-threonine(in) + Na(+)(in) = L-threonine(out) + Na(+)(out). Functionally, involved in the import of serine and threonine into the cell, with the concomitant import of sodium (symport system). The polypeptide is Serine/threonine transporter SstT (Campylobacter fetus subsp. fetus (strain 82-40)).